The sequence spans 465 residues: Sorting nexin-8 (465 aa).

Residues M1 to E19 are compositionally biased toward low complexity. A disordered region spans residues M1–P36. A PX domain is found at A73–D181. R109, K135, and R148 together coordinate a 1,2-diacyl-sn-glycero-3-phospho-(1D-myo-inositol-3-phosphate). A Phosphothreonine modification is found at T452. S456 carries the phosphoserine modification.

This sequence belongs to the sorting nexin family.

The protein localises to the early endosome membrane. Its function is as follows. May be involved in several stages of intracellular trafficking. May play a role in intracellular protein transport from early endosomes to the trans-Golgi network. This chain is Sorting nexin-8 (SNX8), found in Homo sapiens (Human).